Consider the following 435-residue polypeptide: MADDDTTARRPVLSSFGTLGRGWLGVLALLLVIGLGAWAYQLQHGLIETGMRNVFSWGLYIMLFVLFVGLSAGGLILSSAPKFFHSQRYEGFARLGVLVSLGCIIVAGLLILPDIGRPDRIYQFVTSPDFRSPMVWDFGIVMLYGALNVWYLWLLTRRDLAARGSRLSLWVSDSAAGRDRDRTLMFWTAVCALPAAVALHSVTGWIFATQVGRGDWFSPLVAPVFIAKALVSGLGLLLVVSILADRFTAFTADRGELTSLGKLLGIFLAFHVVYLLAAERLPHAWAHHFGFWAITSNFLIGDTVYFWLWTGLGGAVPLLLLATPSLRRRTAVIFTASVLAVFGTLFEGIRLVFTGYQRVNINAAPGIATGGEYAGLTTDAWATAGTYTPTAVEIAVTVGVISIGALIVMAGLRYLPLQRAAPDAAYATDGGDRTQ.

A run of 11 helical transmembrane segments spans residues 22–42, 57–77, 95–115, 135–155, 186–206, 220–240, 257–277, 281–301, 304–324, 333–353, and 392–412; these read GWLGVLALLLVIGLGAWAYQL, WGLYIMLFVLFVGLSAGGLIL, LGVLVSLGCIIVAGLLILPDI, VWDFGIVMLYGALNVWYLWLL, FWTAVCALPAAVALHSVTGWI, LVAPVFIAKALVSGLGLLLVV, LTSLGKLLGIFLAFHVVYLLA, LPHAWAHHFGFWAITSNFLIG, VYFWLWTGLGGAVPLLLLATP, IFTASVLAVFGTLFEGIRLVF, and VEIAVTVGVISIGALIVMAGL.

Belongs to the NrfD family. Probable multiprotein complex that likely consists of DmsA, DmsB and DmsC.

The protein localises to the cell membrane. In terms of biological role, dimethyl sulfoxide (DMSO) reductase catalyzes the reduction of dimethyl sulfoxide (DMSO) to dimethyl sulfide (DMS) during anaerobic respiration; it can also use trimethylamine N-oxide (TMAO) as terminal electron acceptor. Subunit C is proposed to be a membrane anchoring subunit. This is Putative dimethyl sulfoxide reductase membrane subunit C (dmsC) from Halobacterium salinarum (strain ATCC 700922 / JCM 11081 / NRC-1) (Halobacterium halobium).